We begin with the raw amino-acid sequence, 92 residues long: Large ribosomal subunit protein eL31 (92 aa).

Belongs to the eukaryotic ribosomal protein eL31 family.

The polypeptide is Large ribosomal subunit protein eL31 (Desulfurococcus amylolyticus (strain DSM 18924 / JCM 16383 / VKM B-2413 / 1221n) (Desulfurococcus kamchatkensis)).